Consider the following 647-residue polypeptide: Leucine-rich repeat and WD repeat-containing protein 1 (647 aa).

LRR repeat units follow at residues 22–43, 48–69, 70–91, and 92–113; these read KIRS…PKLL, QLQE…LGLS, HLRV…CQFP, and KLEE…LKVS. Positions 204–267 are disordered; sequence RTQVQKANSP…GSPVAGSDGS (64 aa). Phosphoserine is present on residues Ser212, Ser243, Ser251, Ser259, and Ser264. WD repeat units follow at residues 282–335, 341–379, 383–422, 426–472, 484–526, 542–582, and 598–646; these read HSKN…LHKY, EFFS…LLHV, FCCG…LWDI, NQDY…CWDV, EVEF…LWSW, VVLA…LYDV, and APTQ…IWGR.

It belongs to the LRWD1 family. Integral component of the ORC complex. Directly interacts with CDT1, GMNN and ORC2. Interacts with ORC2 only when non-ubiquitinated; this interaction prevents LRWD1 ubiquitination and degradation. Some of these interactions are regulated in a cell-cycle dependent manner. Interaction with ORC1 occurs predominantly during G1. Association with phosphorylated ORC1 during mitosis is not efficient. Interaction with CDT1 occurs during G1 phase, as well as during mitosis with phosphorylated CDT1. Interaction with GMNN occurs from G1/S to mitosis. Interaction with ORC2 is observed throughout the cell cycle. The stoichiometry of the ORCA/ORC/CDT1/GMNN complex is 1:1:1:2. Interacts with CUL4A and DDB1; this interaction may lead to ubiquitination. Post-translationally, ubiquitinated; undergoes 'Lys-48'-linked polyubiquitination leading to proteasomal degradation. Ubiquitination occurs within the WD repeats at the end of the G1 phase. Ubiquitination may be catalyzed by the CUL4-DDB1 E3 ubiquitin-protein ligase complex and other E3 ligases. Testis-specific. Drastically down-regulated in testis from patients with Sertoli cell-only syndrome (SCOS).

The protein localises to the nucleus. The protein resides in the chromosome. Its subcellular location is the centromere. It localises to the telomere. It is found in the cytoplasm. The protein localises to the cytoskeleton. The protein resides in the microtubule organizing center. Its subcellular location is the centrosome. It localises to the kinetochore. Required for G1/S transition. Recruits and stabilizes the origin recognition complex (ORC) onto chromatin during G1 to establish pre-replication complex (preRC) and to heterochromatic sites in post-replicated cells. Binds a combination of DNA and histone methylation repressive marks on heterochromatin. Binds histone H3 and H4 trimethylation marks H3K9me3, H3K27me3 and H4K20me3 in a cooperative manner with DNA methylation. Required for silencing of major satellite repeats. May be important ORC2, ORC3 and ORC4 stability. The chain is Leucine-rich repeat and WD repeat-containing protein 1 (LRWD1) from Homo sapiens (Human).